A 337-amino-acid polypeptide reads, in one-letter code: Dehydrogenase FUB6 (337 aa).

It belongs to the zinc-containing alcohol dehydrogenase family. Quinone oxidoreductase subfamily.

The protein operates within mycotoxin biosynthesis. Functionally, dehydrogenase; part of the gene cluster that mediates the biosynthesis of fusaric acid, a mycotoxin with low to moderate toxicity to animals and humans, but with high phytotoxic properties. L-aspartate is suggested as fusaric acid amino acid precursor that is activated and further processed to O-acetyl-L-homoserine by cluster enzymes aspartate kinase FUB3 and homoserine O-acetyltransferase FUB5, as well as enzymes of the primary metabolism. The polyketide synthase (PKS) FUB1 generates the triketide trans-2-hexenal which is presumptively released by the hydrolase FUB4 and linked to the NRPS-bound amino acid precursor by NAD(P)-dependent dehydrogenase FUB6. FUB1, FUB4, and the non-canonical NRPS Fub8 may form an enzyme complex. Further processing of the NRPS-bound intermediate might be carried out by FUB6 and the O-acetylhomoserine FUB7, enabling a spontaneous electrocyclization to close the carbon backbone of fusaric acid. Dihydrofusaric acid is likely to be released via reduction by the thioester reductase (TR) domain of FUB8 whereupon the final oxidation to fusaric acid may (also) be performed by the FMN-dependent dehydrogenase FUB9. The sequence is that of Dehydrogenase FUB6 from Gibberella fujikuroi (strain CBS 195.34 / IMI 58289 / NRRL A-6831) (Bakanae and foot rot disease fungus).